Reading from the N-terminus, the 346-residue chain is Endo-1,4-beta-xylanase B (346 aa).

An N-terminal signal peptide occupies residues 1 to 19; that stretch reads MKGLPALLLLLIGCVSSFG. Positions 41–338 constitute a GH10 domain; the sequence is GNNFWSLPDA…KPCYFAIREL (298 aa). The active-site Proton donor is Glu153. Glu259 acts as the Nucleophile in catalysis.

Belongs to the glycosyl hydrolase 10 (cellulase F) family.

It carries out the reaction Endohydrolysis of (1-&gt;4)-beta-D-xylosidic linkages in xylans.. The chain is Endo-1,4-beta-xylanase B (xynB) from Thermotoga neapolitana.